Here is a 756-residue protein sequence, read N- to C-terminus: 1-phosphatidylinositol 4,5-bisphosphate phosphodiesterase delta-1 (756 aa).

The PH domain occupies 21 to 130; the sequence is ALLKGSQLLK…WVLGLHKIIH (110 aa). The tract at residues 30 to 57 is substrate binding; the sequence is KVKSSSWRRERFYKLQEDCKTIWQESRK. EF-hand domains follow at residues 140-175 and 176-211; these read KLQHWIHSCLRKADKNKDNKMSFKELQNFLKELNIQ and VDDSYARKIFRECDHSQTDSLEDEEIEAFYKMLTQR. Ca(2+) is bound by residues Asp-153, Asn-155, Asp-157, Lys-159, Glu-164, Asp-189, Ser-191, Thr-193, Ser-195, and Glu-200. O-linked (GlcNAc) serine glycosylation is present at Ser-191. O-linked (GlcNAc) threonine glycosylation is present at Thr-193. The PI-PLC X-box domain maps to 296-440; that stretch reads QDMGQPLSHY…LKGKILLKGK (145 aa). His-311 is an active-site residue. Ca(2+)-binding residues include Asn-312, Glu-341, and Asp-343. His-356 is a catalytic residue. Position 390 (Glu-390) interacts with Ca(2+). Substrate is bound by residues Lys-438 and Lys-440. Thr-457 carries the post-translational modification Phosphothreonine. Ser-460 carries the post-translational modification Phosphoserine. The PI-PLC Y-box domain maps to 492-609; that stretch reads LSDMVIYCKS…GYVLKPAFLR (118 aa). Residues Ser-522 and Arg-549 each coordinate substrate. A C2 domain is found at 611-737; it reads PNGTFNPRAL…QGYRHVHLMS (127 aa). Ile-651, Asp-653, Asn-677, Asp-706, Tyr-707, and Asp-708 together coordinate Ca(2+).

In terms of assembly, interacts with TGM2. The cofactor is Ca(2+). Strongly expressed in lung, liver and heart. Also expressed at least in pancreas, kidney, skeletal muscle, placenta and brain.

The enzyme catalyses a 1,2-diacyl-sn-glycero-3-phospho-(1D-myo-inositol-4,5-bisphosphate) + H2O = 1D-myo-inositol 1,4,5-trisphosphate + a 1,2-diacyl-sn-glycerol + H(+). It catalyses the reaction a 1,2-diacyl-sn-glycero-3-phospho-(1D-myo-inositol) + H2O = 1D-myo-inositol 1-phosphate + a 1,2-diacyl-sn-glycerol + H(+). Functionally, the production of the second messenger molecules diacylglycerol (DAG) and inositol 1,4,5-trisphosphate (IP3) is mediated by activated phosphatidylinositol-specific phospholipase C enzymes. Essential for trophoblast and placental development. Binds phosphatidylinositol 4,5-bisphosphate. The polypeptide is 1-phosphatidylinositol 4,5-bisphosphate phosphodiesterase delta-1 (Homo sapiens (Human)).